The sequence spans 337 residues: NADH-quinone oxidoreductase subunit H (337 aa).

The next 8 membrane-spanning stretches (helical) occupy residues 13 to 33 (IIIV…IAYL), 82 to 102 (AVFI…WAVI), 115 to 135 (VGVL…IMAG), 154 to 174 (MVSY…SAGS), 187 to 207 (GVWY…SILA), 248 to 268 (ILMS…PVDI), 274 to 294 (IPGI…FLWV), and 313 to 333 (VFLP…VTFD).

It belongs to the complex I subunit 1 family. In terms of assembly, NDH-1 is composed of 14 different subunits. Subunits NuoA, H, J, K, L, M, N constitute the membrane sector of the complex.

Its subcellular location is the cell inner membrane. It carries out the reaction a quinone + NADH + 5 H(+)(in) = a quinol + NAD(+) + 4 H(+)(out). In terms of biological role, NDH-1 shuttles electrons from NADH, via FMN and iron-sulfur (Fe-S) centers, to quinones in the respiratory chain. The immediate electron acceptor for the enzyme in this species is believed to be ubiquinone. Couples the redox reaction to proton translocation (for every two electrons transferred, four hydrogen ions are translocated across the cytoplasmic membrane), and thus conserves the redox energy in a proton gradient. This subunit may bind ubiquinone. This chain is NADH-quinone oxidoreductase subunit H, found in Rhodospirillum rubrum (strain ATCC 11170 / ATH 1.1.1 / DSM 467 / LMG 4362 / NCIMB 8255 / S1).